Reading from the N-terminus, the 125-residue chain is Large ribosomal subunit protein bL12 (125 aa).

The protein belongs to the bacterial ribosomal protein bL12 family. In terms of assembly, homodimer. Part of the ribosomal stalk of the 50S ribosomal subunit. Forms a multimeric L10(L12)X complex, where L10 forms an elongated spine to which 2 to 4 L12 dimers bind in a sequential fashion. Binds GTP-bound translation factors.

Its function is as follows. Forms part of the ribosomal stalk which helps the ribosome interact with GTP-bound translation factors. Is thus essential for accurate translation. The protein is Large ribosomal subunit protein bL12 of Sinorhizobium medicae (strain WSM419) (Ensifer medicae).